Consider the following 307-residue polypeptide: Taste receptor type 2 member 10 (307 aa).

Residues 1–6 (MLRVVE) lie on the Extracellular side of the membrane. Residues 7 to 27 (GIFIFVVISESVFGVLGNGFI) traverse the membrane as a helical segment. Residues 28–42 (GLVNCIDCAKNKLST) are Cytoplasmic-facing. A helical membrane pass occupies residues 43–63 (IGFILTGLAISRIFLIWIIIT). The Extracellular portion of the chain corresponds to 64 to 100 (DGFIQIFSPNIYASSNLIEYISYFWVIGNQSSMWFAT). The chain crosses the membrane as a helical span at residues 101–121 (SLSIFYFLKIANFSNYIFLWL). Topologically, residues 122 to 126 (KSRTN) are cytoplasmic. The chain crosses the membrane as a helical span at residues 127–147 (MVLPFMIVFLLISSLLNFAYI). Over 148 to 179 (AKILNDYKMKNDTVWDLNMYKSEYFIKQILLN) the chain is Extracellular. N-linked (GlcNAc...) asparagine glycosylation occurs at Asn-158. A helical membrane pass occupies residues 180–200 (LGVIFFFTLSLITCVLLIISL). Residues 201–227 (WRHNRQMQSNVTGLRDSNTEAHVKAMK) lie on the Cytoplasmic side of the membrane. Residues 228 to 248 (VLISFIILFILYFIGMAIEIS) traverse the membrane as a helical segment. At 249–257 (YFTVRENKL) the chain is on the extracellular side. A helical membrane pass occupies residues 258 to 278 (LLMFGMTTTAIYPWGHSFILI). Over 279–307 (LGNSKLKQASLRVLQQLKCCEKRKNLRVT) the chain is Cytoplasmic.

Belongs to the G-protein coupled receptor T2R family.

The protein localises to the membrane. In terms of biological role, receptor that may play a role in the perception of bitterness and is gustducin-linked. May play a role in sensing the chemical composition of the gastrointestinal content. The activity of this receptor may stimulate alpha gustducin, mediate PLC-beta-2 activation and lead to the gating of TRPM5. The protein is Taste receptor type 2 member 10 (TAS2R10) of Pan paniscus (Pygmy chimpanzee).